The sequence spans 321 residues: Glucokinase (321 aa).

8-13 (GDVGGT) provides a ligand contact to ATP.

The protein belongs to the bacterial glucokinase family.

The protein resides in the cytoplasm. It catalyses the reaction D-glucose + ATP = D-glucose 6-phosphate + ADP + H(+). In terms of biological role, not highly important in E.coli as glucose is transported into the cell by the PTS system already as glucose 6-phosphate. The sequence is that of Glucokinase from Escherichia coli O139:H28 (strain E24377A / ETEC).